A 346-amino-acid chain; its full sequence is Pheromone receptor 2 (346 aa).

7 helical membrane passes run 8–28 (VSFG…CLIH), 34–54 (IGVL…GINA), 71–94 (LSAI…LQRL), 115–135 (LIDF…FFIV), 160–180 (FIYH…AVLV), 219–239 (VLVS…GGLL), and 270–290 (LSIL…FFGL).

This sequence belongs to the G-protein coupled receptor 4 family.

Its subcellular location is the membrane. Functionally, receptor for the A1 pheromone, a prenylated mating factor. The sequence is that of Pheromone receptor 2 (PRA2) from Mycosarcoma maydis (Corn smut fungus).